Here is a 539-residue protein sequence, read N- to C-terminus: Putative serine/threonine-protein kinase L670 (539 aa).

A Cyclin N-terminal domain is found at 1 to 115 (MSLFNNHPEL…ILKVFKFGLH (115 aa)). Residues 258–519 (MNVIEKLGIG…VLKIFSECFV (262 aa)) enclose the Protein kinase domain. Residues 264–272 (LGIGSFGLV) and Lys285 each bind ATP. Asp375 serves as the catalytic Proton acceptor.

This sequence belongs to the protein kinase superfamily. Ser/Thr protein kinase family.

It catalyses the reaction L-seryl-[protein] + ATP = O-phospho-L-seryl-[protein] + ADP + H(+). It carries out the reaction L-threonyl-[protein] + ATP = O-phospho-L-threonyl-[protein] + ADP + H(+). This is Putative serine/threonine-protein kinase L670 from Acanthamoeba polyphaga mimivirus (APMV).